A 419-amino-acid polypeptide reads, in one-letter code: Serine hydroxymethyltransferase 1 (419 aa).

Residues L121 and 125–127 (GHL) contribute to the (6S)-5,6,7,8-tetrahydrofolate site. An N6-(pyridoxal phosphate)lysine modification is found at K230. Position 356–358 (356–358 (SPF)) interacts with (6S)-5,6,7,8-tetrahydrofolate.

Belongs to the SHMT family. In terms of assembly, homodimer. Requires pyridoxal 5'-phosphate as cofactor.

The protein localises to the cytoplasm. It catalyses the reaction (6R)-5,10-methylene-5,6,7,8-tetrahydrofolate + glycine + H2O = (6S)-5,6,7,8-tetrahydrofolate + L-serine. It participates in one-carbon metabolism; tetrahydrofolate interconversion. It functions in the pathway amino-acid biosynthesis; glycine biosynthesis; glycine from L-serine: step 1/1. Catalyzes the reversible interconversion of serine and glycine with tetrahydrofolate (THF) serving as the one-carbon carrier. This reaction serves as the major source of one-carbon groups required for the biosynthesis of purines, thymidylate, methionine, and other important biomolecules. Also exhibits THF-independent aldolase activity toward beta-hydroxyamino acids, producing glycine and aldehydes, via a retro-aldol mechanism. This chain is Serine hydroxymethyltransferase 1, found in Colwellia psychrerythraea (strain 34H / ATCC BAA-681) (Vibrio psychroerythus).